The primary structure comprises 156 residues: Small ribosomal subunit protein uS7 (156 aa).

It belongs to the universal ribosomal protein uS7 family. As to quaternary structure, part of the 30S ribosomal subunit. Contacts proteins S9 and S11.

Functionally, one of the primary rRNA binding proteins, it binds directly to 16S rRNA where it nucleates assembly of the head domain of the 30S subunit. Is located at the subunit interface close to the decoding center, probably blocks exit of the E-site tRNA. The polypeptide is Small ribosomal subunit protein uS7 (Rhodococcus erythropolis (strain PR4 / NBRC 100887)).